The chain runs to 263 residues: Interleukin-33 (263 aa).

A compositionally biased stretch (polar residues) spans 1–17; sequence MKYSTTKIPPAKMNSSA. Positions 1 to 28 are disordered; it reads MKYSTTKIPPAKMNSSADKALVKSPKLR. Residues 1-65 are homeodomain-like HTH domain; sequence MKYSTTKIPP…CYFRKEITKR (65 aa). The tract at residues 62-103 is interaction with RELA; it reads ITKRYSPRTAEKCRKQCLVFTACHQQLNKDFTSDVPMLQKCF.

This sequence belongs to the IL-1 family. Highly divergent. As to quaternary structure, forms a 1:1:1 heterotrimeric complex with its primary high-affinity receptor IL1RL1 and the coreceptor IL1RAP. Interacts with cargo receptor TMED10; the interaction mediates the translocation from the cytoplasm into the ERGIC (endoplasmic reticulum-Golgi intermediate compartment) and thereby secretion. In terms of processing, the full-length protein can be released from cells and is able to signal via the IL1RL1/ST2 receptor. However, proteolytic processing by CELA1, CSTG/cathepsin G and ELANE/neutrophil elastase produces C-terminal peptides that are more active than the unprocessed full-length protein. May also be proteolytically processed by calpains. Proteolytic cleavage mediated by apoptotic caspases including CASP3 and CASP7 results in IL33 inactivation. In vitro proteolytic cleavage by CASP1 was reported but could not be confirmed in vivo suggesting that IL33 is probably not a direct substrate for that caspase. In terms of tissue distribution, expressed in cultured umbilical artery smooth muscle cells after stimulation with IL1A and IL1B, and to a lesser extent with IFNG. Expressed in vasospastic cerebral arteries after subarachnoid hemorrhage.

It is found in the nucleus. Its subcellular location is the chromosome. The protein resides in the cytoplasm. The protein localises to the cytoplasmic vesicle. It localises to the secretory vesicle. It is found in the secreted. In terms of biological role, cytokine that binds to and signals through the IL1RL1/ST2 receptor which in turn activates NF-kappa-B and MAPK signaling pathways in target cells. Involved in the maturation of Th2 cells inducing the secretion of T-helper type 2-associated cytokines. Also involved in activation of mast cells, basophils, eosinophils and natural killer cells. Acts as a chemoattractant for Th2 cells, and may function as an 'alarmin', that amplifies immune responses during tissue injury. Induces rapid UCP2-dependent mitochondrial rewiring that attenuates the generation of reactive oxygen species and preserves the integrity of Krebs cycle required for persistent production of itaconate and subsequent GATA3-dependent differentiation of inflammation-resolving alternatively activated macrophages. Its function is as follows. In quiescent endothelia the uncleaved form is constitutively and abundantly expressed, and acts as a chromatin-associated nuclear factor with transcriptional repressor properties, it may sequester nuclear NF-kappaB/RELA, lowering expression of its targets. This form is rapidely lost upon angiogenic or pro-inflammatory activation. The sequence is that of Interleukin-33 (IL33) from Canis lupus familiaris (Dog).